Here is a 251-residue protein sequence, read N- to C-terminus: tRNA (guanine-N(1)-)-methyltransferase (251 aa).

Residues glycine 113 and 133-138 contribute to the S-adenosyl-L-methionine site; that span reads IGDYVL.

The protein belongs to the RNA methyltransferase TrmD family. Homodimer.

The protein resides in the cytoplasm. The enzyme catalyses guanosine(37) in tRNA + S-adenosyl-L-methionine = N(1)-methylguanosine(37) in tRNA + S-adenosyl-L-homocysteine + H(+). Its function is as follows. Specifically methylates guanosine-37 in various tRNAs. This chain is tRNA (guanine-N(1)-)-methyltransferase, found in Pectobacterium atrosepticum (strain SCRI 1043 / ATCC BAA-672) (Erwinia carotovora subsp. atroseptica).